The sequence spans 567 residues: uncharacterized protein (567 aa).

Residues 1 to 26 are disordered; it reads MPSEKATTRHLPGAVETLSPRTGRRP. 6 consecutive transmembrane segments (helical) span residues 57–77, 90–110, 142–162, 173–193, 221–241, and 257–277; these read AILVTNVIGLIVGAMLLTVAF, VSFGIVPGYCVLAFILGTYWL, VALAVLFLWGAAAALWTIIYG, LFSMGVIGVVAATSCYLLTEF, MLVWLLCSGVPNVGVALTAIF, and VLILWAPLLIFGFILMWILAW. In terms of domain architecture, HAMP spans 277-329; the sequence is WLTATPVRVVREALNRVEQGDLSGDLVVFDGTELGELQRGFNRMVEGLRERER. Residues 361–485 enclose the Guanylate cyclase domain; it reads AVVFVDIVGS…EPVNEAARLC (125 aa).

This sequence belongs to the adenylyl cyclase class-3 family.

Its subcellular location is the cell membrane. This is an uncharacterized protein from Mycobacterium bovis (strain ATCC BAA-935 / AF2122/97).